The following is a 613-amino-acid chain: V-type proton ATPase catalytic subunit A isoform 2 (613 aa).

240-247 (GAFGCGKT) contacts ATP.

This sequence belongs to the ATPase alpha/beta chains family. In terms of assembly, V-ATPase is a heteromultimeric enzyme composed of a peripheral catalytic V1 complex (main components: subunits A, B, C, D, E, and F) attached to an integral membrane V0 proton pore complex (main component: the proteolipid protein).

It catalyses the reaction ATP + H2O + 4 H(+)(in) = ADP + phosphate + 5 H(+)(out). In terms of biological role, catalytic subunit of the peripheral V1 complex of vacuolar ATPase. V-ATPase vacuolar ATPase is responsible for acidifying a variety of intracellular compartments in eukaryotic cells. The protein is V-type proton ATPase catalytic subunit A isoform 2 of Acetabularia acetabulum (Mermaid's wine glass).